The primary structure comprises 189 residues: Elongation factor P (189 aa).

N6-(3,6-diaminohexanoyl)-5-hydroxylysine is present on lysine 34.

This sequence belongs to the elongation factor P family. Post-translationally, may be beta-lysylated on the epsilon-amino group of Lys-34 by the combined action of EpmA and EpmB, and then hydroxylated on the C5 position of the same residue by EpmC (if this protein is present). Lysylation is critical for the stimulatory effect of EF-P on peptide-bond formation. The lysylation moiety may extend toward the peptidyltransferase center and stabilize the terminal 3-CCA end of the tRNA. Hydroxylation of the C5 position on Lys-34 may allow additional potential stabilizing hydrogen-bond interactions with the P-tRNA.

Its subcellular location is the cytoplasm. Its pathway is protein biosynthesis; polypeptide chain elongation. Its function is as follows. Involved in peptide bond synthesis. Alleviates ribosome stalling that occurs when 3 or more consecutive Pro residues or the sequence PPG is present in a protein, possibly by augmenting the peptidyl transferase activity of the ribosome. Modification of Lys-34 is required for alleviation. The sequence is that of Elongation factor P from Alcanivorax borkumensis (strain ATCC 700651 / DSM 11573 / NCIMB 13689 / SK2).